The sequence spans 223 residues: MSAKIGVITFPGTLDDVDALRAVRIAGAEPVNLWHADEDLRGVDAVVVPGGFSYGDYLRTGAISALAPVMQSVIEAAGRGMPVLGICNGFQILTEARLLPGALTRNQGLHFHCVDTHLEVVNTDTAWTGTLEQGQKILVPAKHGEGRFQAEPDTIRMLEEEGRVVFRYTDNFNGSINGIAGITNETGRVVGLMPHPEHAVETLTGPSVDGLELFLSAIGTIAA.

The 220-residue stretch at 4–223 folds into the Glutamine amidotransferase type-1 domain; it reads KIGVITFPGT…FLSAIGTIAA (220 aa). The Nucleophile role is filled by Cys87. Active-site residues include His195 and Glu197.

As to quaternary structure, part of the FGAM synthase complex composed of 1 PurL, 1 PurQ and 2 PurS subunits.

The protein localises to the cytoplasm. It catalyses the reaction N(2)-formyl-N(1)-(5-phospho-beta-D-ribosyl)glycinamide + L-glutamine + ATP + H2O = 2-formamido-N(1)-(5-O-phospho-beta-D-ribosyl)acetamidine + L-glutamate + ADP + phosphate + H(+). The catalysed reaction is L-glutamine + H2O = L-glutamate + NH4(+). It participates in purine metabolism; IMP biosynthesis via de novo pathway; 5-amino-1-(5-phospho-D-ribosyl)imidazole from N(2)-formyl-N(1)-(5-phospho-D-ribosyl)glycinamide: step 1/2. Its function is as follows. Part of the phosphoribosylformylglycinamidine synthase complex involved in the purines biosynthetic pathway. Catalyzes the ATP-dependent conversion of formylglycinamide ribonucleotide (FGAR) and glutamine to yield formylglycinamidine ribonucleotide (FGAM) and glutamate. The FGAM synthase complex is composed of three subunits. PurQ produces an ammonia molecule by converting glutamine to glutamate. PurL transfers the ammonia molecule to FGAR to form FGAM in an ATP-dependent manner. PurS interacts with PurQ and PurL and is thought to assist in the transfer of the ammonia molecule from PurQ to PurL. The protein is Phosphoribosylformylglycinamidine synthase subunit PurQ of Corynebacterium efficiens (strain DSM 44549 / YS-314 / AJ 12310 / JCM 11189 / NBRC 100395).